The following is a 968-amino-acid chain: Glycine dehydrogenase (decarboxylating) (968 aa).

Lysine 712 carries the N6-(pyridoxal phosphate)lysine modification.

Belongs to the GcvP family. In terms of assembly, the glycine cleavage system is composed of four proteins: P, T, L and H. It depends on pyridoxal 5'-phosphate as a cofactor.

It carries out the reaction N(6)-[(R)-lipoyl]-L-lysyl-[glycine-cleavage complex H protein] + glycine + H(+) = N(6)-[(R)-S(8)-aminomethyldihydrolipoyl]-L-lysyl-[glycine-cleavage complex H protein] + CO2. In terms of biological role, the glycine cleavage system catalyzes the degradation of glycine. The P protein binds the alpha-amino group of glycine through its pyridoxal phosphate cofactor; CO(2) is released and the remaining methylamine moiety is then transferred to the lipoamide cofactor of the H protein. This is Glycine dehydrogenase (decarboxylating) from Prochlorococcus marinus (strain NATL2A).